The sequence spans 339 residues: Zinc transporter 3 (339 aa).

A signal peptide spans 1–25 (MKTKNVKLLFFFFSVSLLLIAVVNA). Topologically, residues 26–54 (AEGHSHGGPKCECSHEDDHENKAGARKYK) are extracellular. Residues 55–75 (IAAIPTVLIAGIIGVLFPLLG) traverse the membrane as a helical segment. Residues 76–86 (KVFPSLRPETC) lie on the Cytoplasmic side of the membrane. The chain crosses the membrane as a helical span at residues 87 to 107 (FFFVTKAFAAGVILATGFMHV). Topologically, residues 108-123 (LPEAYEMLNSPCLTSE) are extracellular. A helical transmembrane segment spans residues 124–144 (AWEFPFTGFIAMIAAILTLSV). Residues 145-184 (DTFATSSFYKSHCKASKRVSDGETGESSVDSEKVQILRTR) lie on the Cytoplasmic side of the membrane. A helical membrane pass occupies residues 185–205 (VIAQVLELGIIVHSVVIGISL). Residues 206–216 (GASQSPDAAKA) are Extracellular-facing. A helical transmembrane segment spans residues 217–237 (LFIALMFHQCFEGLGLGGCIA). Residues 238-247 (QGKFKCLSVT) are Cytoplasmic-facing. Residues 248–268 (IMSTFFAITTPIGIVVGMGIA) traverse the membrane as a helical segment. Residues 269–278 (NSYDESSPTA) are Extracellular-facing. The chain crosses the membrane as a helical span at residues 279-299 (LIVQGVLNAASAGILIYMSLV). Topologically, residues 300 to 315 (DLLAADFTHPKMQSNT) are cytoplasmic. The chain crosses the membrane as a helical span at residues 316-336 (GLQIMAHIALLLGAGLMSLLA). The Extracellular portion of the chain corresponds to 337–339 (KWA).

The protein belongs to the ZIP transporter (TC 2.A.5) family. In terms of tissue distribution, expressed predominantly in the roots of zinc-deficient plants.

The protein localises to the cell membrane. Mediates zinc uptake from the rhizosphere. May also transport other divalent cations. In Arabidopsis thaliana (Mouse-ear cress), this protein is Zinc transporter 3 (ZIP3).